Here is a 330-residue protein sequence, read N- to C-terminus: Thioredoxin domain-containing protein 6 (330 aa).

The region spanning 11–115 (QVNISTQELW…QKTILDQLEA (105 aa)) is the Thioredoxin domain. The tract at residues 157 to 303 (ERTCTLAIIK…LFPSLKFSDK (147 aa)) is NDK. Residues 300–330 (FSDKDTEAPQGGEAEATAGPTEALCFPEDVD) are disordered. Over residues 307–322 (APQGGEAEATAGPTEA) the composition is skewed to low complexity.

The protein belongs to the NDK family. As to quaternary structure, monomer and homodimer. In terms of tissue distribution, detected at very low levels in testis, lung and brain.

The protein localises to the cytoplasm. It is found in the cytoskeleton. It localises to the cilium axoneme. Its subcellular location is the dynein axonemal particle. Its function is as follows. May be a regulator of microtubule physiology. This Homo sapiens (Human) protein is Thioredoxin domain-containing protein 6.